The primary structure comprises 510 residues: MLRRALLCLALTALFRAGAGAPDEEDHVLVLHKGNFDEALAAHKYLLVEFYAPWCGHCKALAPEYAKAAGKLKAEGSEIRLAKVDATEESDLAQQYGVRGYPTIKFFKNGDTASPKEYTAGREADDIVNWLKKRTGPAASTLSDGAAAEALVESSEVAVIGFFKDMESDSAKQFFLAAEVIDDIPFGITSNSDVFSKYQLDKDGVVLFKKFDEGRNNFEGEVTKEKLLDFIKHNQLPLVIEFTEQTAPKIFGGEIKTHILLFLPKSVSDYEGKLSNFKKAAESFKGKILFIFIDSDHTDNQRILEFFGLKKEECPAVRLITLEEEMTKYKPESDELTAEKITEFCHRFLEGKIKPHLMSQELPDDWDKQPVKVLVGKNFEEVAFDEKKNVFVEFYAPWCGHCKQLAPIWDKLGETYKDHENIVIAKMDSTANEVEAVKVHSFPTLKFFPASADRTVIDYNGERTLDGFKKFLESGGQDGAGDDDDLEDLEEAEEPDLEEDDDQKAVKDEL.

The signal sequence occupies residues 1–20 (MLRRALLCLALTALFRAGAG). Residues 27 to 136 (HVLVLHKGNF…IVNWLKKRTG (110 aa)) form the Thioredoxin 1 domain. Residues C55 and C58 each act as nucleophile in the active site. Residues C55 and C58 are joined by a disulfide bond. The residue at position 202 (K202) is an N6-acetyllysine. 2 positions are modified to N6-succinyllysine: K224 and K273. 2 positions are modified to phosphoserine: S333 and S359. The Thioredoxin 2 domain maps to 351-477 (GKIKPHLMSQ…FKKFLESGGQ (127 aa)). Active-site nucleophile residues include C399 and C402. C399 and C402 are oxidised to a cystine. S429 is subject to Phosphoserine. The tract at residues 473–510 (ESGGQDGAGDDDDLEDLEEAEEPDLEEDDDQKAVKDEL) is disordered. Positions 480-502 (AGDDDDLEDLEEAEEPDLEEDDD) are enriched in acidic residues. The Prevents secretion from ER motif lies at 507–510 (KDEL).

Belongs to the protein disulfide isomerase family. In terms of assembly, heterodimer; heterodimerizes with the protein microsomal triglyceride transfer MTTP. Homodimer. Monomers and homotetramers may also occur. Interacts with P4HA2, forming a heterotetramer consisting of 2 alpha subunits (P4HA2) and 2 beta (P4HB), where P4HB plays the role of a structural subunit; this tetramer catalyzes the formation of 4-hydroxyproline in collagen. Also constitutes the structural subunit of the microsomal triacylglycerol transfer protein MTTP in mammalian cells. Stabilizes both enzymes and retain them in the ER without contributing to the catalytic activity. Binds UBQLN1. Interacts with ERO1B. Interacts with ILDR2. Interacts with ERN1/IRE1A (via N-terminus); the interaction is enhanced by phosphorylation of P4HB by FAM20C in response to endoplasmic reticulum stress and results in attenuation of ERN1 activity. Post-translationally, phosphorylation of Ser-359 by FAM20C is induced by endoplasmic reticulum stress and results in a functional switch from oxidoreductase to molecular chaperone. It also promotes interaction with ERN1.

It localises to the endoplasmic reticulum. It is found in the endoplasmic reticulum lumen. Its subcellular location is the melanosome. The protein localises to the cell membrane. The catalysed reaction is Catalyzes the rearrangement of -S-S- bonds in proteins.. In terms of biological role, this multifunctional protein catalyzes the formation, breakage and rearrangement of disulfide bonds. At the cell surface, seems to act as a reductase that cleaves disulfide bonds of proteins attached to the cell. May therefore cause structural modifications of exofacial proteins. Inside the cell, seems to form/rearrange disulfide bonds of nascent proteins. At high concentrations and following phosphorylation by FAM20C, functions as a chaperone that inhibits aggregation of misfolded proteins. At low concentrations, facilitates aggregation (anti-chaperone activity). May be involved with other chaperones in the structural modification of the TG precursor in hormone biogenesis. Also acts as a structural subunit of various enzymes such as prolyl 4-hydroxylase and microsomal triacylglycerol transfer protein MTTP. Receptor for LGALS9; the interaction retains P4HB at the cell surface of Th2 T helper cells, increasing disulfide reductase activity at the plasma membrane, altering the plasma membrane redox state and enhancing cell migration. This chain is Protein disulfide-isomerase (P4HB), found in Bos taurus (Bovine).